Here is a 397-residue protein sequence, read N- to C-terminus: SET domain-containing protein 4 (397 aa).

The SET domain occupies 29–245 (AKLEPCRFKE…KCSEVFINYG (217 aa)). Residue tyrosine 244 participates in S-adenosyl-L-methionine binding.

This sequence belongs to the class V-like SAM-binding methyltransferase superfamily. SETD4 family.

The protein resides in the nucleus. The enzyme catalyses L-lysyl(79)-[histone H3] + 3 S-adenosyl-L-methionine = N(6),N(6),N(6)-trimethyl-L-lysyl(79)-[histone H3] + 3 S-adenosyl-L-homocysteine + 3 H(+). The catalysed reaction is L-lysyl(20)-[histone H4] + S-adenosyl-L-methionine = N(6)-methyl-L-lysyl(20)-[histone H4] + S-adenosyl-L-homocysteine + H(+). It catalyses the reaction N(6)-methyl-L-lysyl(20)-[histone H4] + S-adenosyl-L-methionine = N(6),N(6)-dimethyl-L-lysyl(20)-[histone H4] + S-adenosyl-L-homocysteine + H(+). It carries out the reaction N(6),N(6)-dimethyl-L-lysyl(20)-[histone H4] + S-adenosyl-L-methionine = N(6),N(6),N(6)-trimethyl-L-lysyl(20)-[histone H4] + S-adenosyl-L-homocysteine + H(+). Functionally, protein-lysine N-methyltransferase involved in the regulation of cell quiescence by catalyzing the trimethylation of 'Lys-20' of histone H4 and 'Lys-79' of histone H3 (H4K20me3 and H3K79me3, respectively) during diapause formation, a state of obligate dormancy. This is SET domain-containing protein 4 from Artemia parthenogenetica (Brine shrimp).